The chain runs to 160 residues: Non-secretory ribonuclease (160 aa).

The N-terminal stretch at 1-27 is a signal peptide; the sequence is MVPKLFTSPICLLLLLGLMGVEGSLHA. C-linked (Man) tryptophan glycosylation is present at Trp-34. Catalysis depends on His-42, which acts as the Proton acceptor. N-linked (GlcNAc...) asparagine glycosylation occurs at Asn-44. Intrachain disulfides connect Cys-50-Cys-110, Cys-64-Cys-122, Cys-82-Cys-137, and Cys-89-Cys-98. The residue at position 60 (Tyr-60) is a 3'-nitrotyrosine. 65–69 contacts substrate; sequence KNQNT. Asn-92, Asn-111, Asn-118, and Asn-138 each carry an N-linked (GlcNAc...) asparagine glycan. His-155 serves as the catalytic Proton donor.

Belongs to the pancreatic ribonuclease family. In terms of assembly, interacts with and forms a tight 1:1 complex with RNH1. Dimerization of two such complexes may occur.

It is found in the lysosome. It localises to the cytoplasmic granule. The catalysed reaction is an [RNA] containing cytidine + H2O = an [RNA]-3'-cytidine-3'-phosphate + a 5'-hydroxy-ribonucleotide-3'-[RNA].. It catalyses the reaction an [RNA] containing uridine + H2O = an [RNA]-3'-uridine-3'-phosphate + a 5'-hydroxy-ribonucleotide-3'-[RNA].. This is a non-secretory ribonuclease. It is a pyrimidine specific nuclease with a slight preference for U. Cytotoxin and helminthotoxin. Possesses a wide variety of biological activities. The polypeptide is Non-secretory ribonuclease (RNASE2) (Chlorocebus aethiops (Green monkey)).